A 276-amino-acid polypeptide reads, in one-letter code: 28 kDa ribonucleoprotein, chloroplastic (276 aa).

Residues 1–57 constitute a chloroplast transit peptide; that stretch reads MATNGCLISLPPFFTTTKSISSYPFLSTQLKPISLSSSLPTLLSLNKRTTQFPTFVS. RRM domains are found at residues 97–175 and 191–269; these read AKLF…KAAP and YRIY…AAEE.

The protein localises to the plastid. Its subcellular location is the chloroplast. Functionally, probably involved in the 3'-end processing of chloroplast mRNA's. This is 28 kDa ribonucleoprotein, chloroplastic from Nicotiana sylvestris (Wood tobacco).